The sequence spans 494 residues: Pre-hexon-linking protein IIIa (494 aa).

The peripentonal hexon-tethering domain stretch occupies residues 1–101 (MAALSPTVRA…ALLQRVGRYN (101 aa)). Residues 132-245 (GSLVALNGFL…FTDSRTVNGD (114 aa)) form a binding to hexon-linking protein region. Threonine 268 is modified (phosphothreonine; by host). Phosphoserine; by host is present on residues serine 439 and serine 456. Positions 484–494 (TNPFKHLQPQF) are excised as a propeptide.

The protein belongs to the adenoviridae hexon-linking protein IIIa family. Interacts with hexon proteins; this interaction tethers the peripentonal hexons to hexons situated in the facet. Interacts with the penton protein (via N-terminus). Interacts with packaging protein 3; this interaction is required to promote correct genome packaging. In terms of processing, cleaved near the C-terminus by the viral protease during virion maturation to form the mature protein.

It localises to the virion. It is found in the host nucleus. Functionally, structural component of the virion that acts as a cement protein on the capsid exterior which mediates the interactions between the hexons, including the peripentonal hexons, and reaches all the way to the penton vertices. Two hexon linking proteins IIIa, one from each facet, stabilize the unique edge interface between a pair of facets. As the virus enters the host cell, hexon linking proteins IIIa are shed concomitant with virion acidification in the endosome. During virus assembly, seems to play a role in the serotype specificity of the packaging of viral DNA via its interaction with packaging protein 3. The protein is Pre-hexon-linking protein IIIa of Murine adenovirus A serotype 1 (MAdV-1).